A 917-amino-acid chain; its full sequence is Bifunctional aspartokinase/homoserine dehydrogenase 2, chloroplastic (917 aa).

Residues 1–89 (MQGLAVSCQL…EVNTYLPKGD (89 aa)) constitute a chloroplast transit peptide. The tract at residues 90–338 (MWSVHKFGGT…VSEAVILSTL (249 aa)) is aspartokinase. Residues 339 to 563 (SYQEAWEMSY…LSKTTLAVGI (225 aa)) are interface. 2 ACT domains span residues 413–488 (VEGT…VING) and 494–571 (AVGL…LIGG). The homoserine dehydrogenase stretch occupies residues 564–917 (IGPGLIGGAL…RLASYLGAPS (354 aa)). NAD(+)-binding residues include isoleucine 569 and threonine 650. NADP(+) is bound by residues isoleucine 569, threonine 650, and lysine 674. NADPH contacts are provided by isoleucine 569, threonine 650, and lysine 674. The Na(+) site is built by glutamate 701, valine 704, alanine 706, and leucine 708. Residues glycine 759 and glutamate 762 each coordinate NADP(+). L-homoserine is bound by residues glutamate 762 and aspartate 773. Lysine 777 serves as the catalytic Proton donor. Glycine 894 is a binding site for NAD(+). Glycine 894 lines the NADP(+) pocket. Glycine 894 lines the NADPH pocket.

In the N-terminal section; belongs to the aspartokinase family. This sequence in the C-terminal section; belongs to the homoserine dehydrogenase family. As to quaternary structure, homo- or heterodimer. It depends on a metal cation as a cofactor.

The protein localises to the plastid. Its subcellular location is the chloroplast. It carries out the reaction L-homoserine + NADP(+) = L-aspartate 4-semialdehyde + NADPH + H(+). The enzyme catalyses L-homoserine + NAD(+) = L-aspartate 4-semialdehyde + NADH + H(+). It catalyses the reaction L-aspartate + ATP = 4-phospho-L-aspartate + ADP. It participates in amino-acid biosynthesis; L-lysine biosynthesis via DAP pathway; (S)-tetrahydrodipicolinate from L-aspartate: step 1/4. The protein operates within amino-acid biosynthesis; L-methionine biosynthesis via de novo pathway; L-homoserine from L-aspartate: step 1/3. Its pathway is amino-acid biosynthesis; L-methionine biosynthesis via de novo pathway; L-homoserine from L-aspartate: step 3/3. It functions in the pathway amino-acid biosynthesis; L-threonine biosynthesis; L-threonine from L-aspartate: step 1/5. It participates in amino-acid biosynthesis; L-threonine biosynthesis; L-threonine from L-aspartate: step 3/5. Functionally, bifunctional aspartate kinase and homoserine dehydrogenase that catalyzes the first and the third steps toward the synthesis of lysine, methionine and threonine from aspartate. This chain is Bifunctional aspartokinase/homoserine dehydrogenase 2, chloroplastic (AKHSDH2), found in Zea mays (Maize).